The primary structure comprises 367 residues: Molybdopterin synthase catalytic subunit (367 aa).

Substrate contacts are provided by residues 101 to 102, K117, and 124 to 126; these read HR and KKE.

The protein belongs to the MoaE family. MOCS2B subfamily. Heterotetramer; composed of 2 small (Mocs2A) and 2 large (Mocs2B) subunits.

The protein resides in the cytoplasm. It catalyses the reaction 2 [molybdopterin-synthase sulfur-carrier protein]-C-terminal-Gly-aminoethanethioate + cyclic pyranopterin phosphate + H2O = molybdopterin + 2 [molybdopterin-synthase sulfur-carrier protein]-C-terminal Gly-Gly + 2 H(+). Its pathway is cofactor biosynthesis; molybdopterin biosynthesis. Functionally, catalytic subunit of the molybdopterin synthase complex, a complex that catalyzes the conversion of precursor Z into molybdopterin. Acts by mediating the incorporation of 2 sulfur atoms from thiocarboxylated Mocs2A into precursor Z to generate a dithiolene group. This chain is Molybdopterin synthase catalytic subunit, found in Drosophila erecta (Fruit fly).